The primary structure comprises 247 residues: ATP synthase subunit a, chloroplastic (247 aa).

Transmembrane regions (helical) follow at residues 38–58, 95–115, 134–154, 199–219, and 220–240; these read QVLI…TIAV, VPFI…GALL, INTT…AGLT, LVVV…VMLL, and GLFT…AYIG.

It belongs to the ATPase A chain family. As to quaternary structure, F-type ATPases have 2 components, CF(1) - the catalytic core - and CF(0) - the membrane proton channel. CF(1) has five subunits: alpha(3), beta(3), gamma(1), delta(1), epsilon(1). CF(0) has four main subunits: a, b, b' and c.

The protein resides in the plastid. It localises to the chloroplast thylakoid membrane. Key component of the proton channel; it plays a direct role in the translocation of protons across the membrane. In Solanum lycopersicum (Tomato), this protein is ATP synthase subunit a, chloroplastic.